The chain runs to 266 residues: Undecaprenyl-diphosphatase (266 aa).

The next 8 helical transmembrane spans lie at 4 to 24 (ILRV…PISS), 39 to 59 (LPIV…IIYY), 88 to 108 (LNLI…GIFI), 114 to 134 (LFTF…LFLI), 147 to 167 (IFFS…PGIS), 186 to 206 (SLEI…FLKY), 214 to 234 (IIFN…FGLF), and 246 to 266 (SKLY…YFLV).

Belongs to the UppP family.

The protein resides in the cell inner membrane. It catalyses the reaction di-trans,octa-cis-undecaprenyl diphosphate + H2O = di-trans,octa-cis-undecaprenyl phosphate + phosphate + H(+). Functionally, catalyzes the dephosphorylation of undecaprenyl diphosphate (UPP). Confers resistance to bacitracin. This is Undecaprenyl-diphosphatase from Borrelia recurrentis (strain A1).